Here is a 234-residue protein sequence, read N- to C-terminus: Phosphoribosylformylglycinamidine synthase subunit PurQ (234 aa).

Positions Ala3 to His231 constitute a Glutamine amidotransferase type-1 domain. The active-site Nucleophile is the Cys87. Active-site residues include His200 and Glu202.

In terms of assembly, part of the FGAM synthase complex composed of 1 PurL, 1 PurQ and 2 PurS subunits.

It is found in the cytoplasm. It catalyses the reaction N(2)-formyl-N(1)-(5-phospho-beta-D-ribosyl)glycinamide + L-glutamine + ATP + H2O = 2-formamido-N(1)-(5-O-phospho-beta-D-ribosyl)acetamidine + L-glutamate + ADP + phosphate + H(+). The enzyme catalyses L-glutamine + H2O = L-glutamate + NH4(+). It participates in purine metabolism; IMP biosynthesis via de novo pathway; 5-amino-1-(5-phospho-D-ribosyl)imidazole from N(2)-formyl-N(1)-(5-phospho-D-ribosyl)glycinamide: step 1/2. Functionally, part of the phosphoribosylformylglycinamidine synthase complex involved in the purines biosynthetic pathway. Catalyzes the ATP-dependent conversion of formylglycinamide ribonucleotide (FGAR) and glutamine to yield formylglycinamidine ribonucleotide (FGAM) and glutamate. The FGAM synthase complex is composed of three subunits. PurQ produces an ammonia molecule by converting glutamine to glutamate. PurL transfers the ammonia molecule to FGAR to form FGAM in an ATP-dependent manner. PurS interacts with PurQ and PurL and is thought to assist in the transfer of the ammonia molecule from PurQ to PurL. The polypeptide is Phosphoribosylformylglycinamidine synthase subunit PurQ (Pseudothermotoga lettingae (strain ATCC BAA-301 / DSM 14385 / NBRC 107922 / TMO) (Thermotoga lettingae)).